A 205-amino-acid polypeptide reads, in one-letter code: Recombination protein RecR (205 aa).

Residues 60 to 75 (CKVCHNISDTETCQIC) form a C4-type zinc finger. The Toprim domain occupies 83-178 (STVCVVENIR…KLSVIARGIS (96 aa)).

It belongs to the RecR family.

May play a role in DNA repair. It seems to be involved in an RecBC-independent recombinational process of DNA repair. It may act with RecF and RecO. This is Recombination protein RecR from Bacteroides thetaiotaomicron (strain ATCC 29148 / DSM 2079 / JCM 5827 / CCUG 10774 / NCTC 10582 / VPI-5482 / E50).